The sequence spans 108 residues: FK506-binding protein 1 (108 aa).

Residues 20-108 (GDSVTIHYVG…KFEVELLKIN (89 aa)) enclose the PPIase FKBP-type domain.

Belongs to the FKBP-type PPIase family. FKBP1 subfamily.

It is found in the cytoplasm. It carries out the reaction [protein]-peptidylproline (omega=180) = [protein]-peptidylproline (omega=0). Inhibited by both FK506 and rapamycin. In terms of biological role, PPIases accelerate the folding of proteins. It catalyzes the cis-trans isomerization of proline imidic peptide bonds in oligopeptides. The chain is FK506-binding protein 1 (FPR1) from Cryptococcus neoformans var. neoformans serotype D (strain JEC21 / ATCC MYA-565) (Filobasidiella neoformans).